Consider the following 522-residue polypeptide: Gypsy retrotransposon integrase-like protein 1 (522 aa).

The Integrase catalytic domain maps to 135–292 (KVENPWSLVT…TPYFQMFSRN (158 aa)). S502 is modified (phosphoserine).

As to expression, widely expressed. Also found in tumors originating from parathyroid gland, colon, stomach, bladder, uterus and prostate.

The sequence is that of Gypsy retrotransposon integrase-like protein 1 (GIN1) from Homo sapiens (Human).